The chain runs to 213 residues: Small ribosomal subunit protein eS6 (213 aa).

Belongs to the eukaryotic ribosomal protein eS6 family.

The polypeptide is Small ribosomal subunit protein eS6 (Sulfolobus acidocaldarius (strain ATCC 33909 / DSM 639 / JCM 8929 / NBRC 15157 / NCIMB 11770)).